Reading from the N-terminus, the 139-residue chain is Stress-related protein 1 (139 aa).

The segment covering Met-1–Thr-12 has biased composition (polar residues). Residues Met-1–Pro-86 are disordered. 2 stretches are compositionally biased toward low complexity: residues Ala-14–Val-53 and Ser-60–Arg-74. The residue at position 60 (Ser-60) is a Phosphoserine.

As to expression, embryo.

In terms of biological role, involved in drought, heat, cold, and/or salt tolerance. This chain is Stress-related protein 1 (SRP1), found in Zea mays (Maize).